Here is a 386-residue protein sequence, read N- to C-terminus: All-trans-retinol dehydrogenase [NAD(+)] ADH7 (386 aa).

Residue C59 coordinates Zn(2+). 60–64 (RTDDH) contacts NAD(+). 6 residues coordinate Zn(2+): H80, C110, C113, C116, C124, and C186. NAD(+)-binding positions include 211 to 216 (GLGGVG), D235, K240, 281 to 283 (IGH), 304 to 306 (VGV), 329 to 331 (CVF), and R381.

Belongs to the zinc-containing alcohol dehydrogenase family. Class-IV subfamily. Homodimer. It depends on Zn(2+) as a cofactor. In terms of tissue distribution, preferentially expressed in stomach.

The protein resides in the cytoplasm. The catalysed reaction is a primary alcohol + NAD(+) = an aldehyde + NADH + H(+). It catalyses the reaction 10-hydroxydecanoate + NAD(+) = 10-oxodecanoate + NADH + H(+). The enzyme catalyses all-trans-retinol + NAD(+) = all-trans-retinal + NADH + H(+). It carries out the reaction 9-cis-retinol + NAD(+) = 9-cis-retinal + NADH + H(+). The catalysed reaction is all-trans-3,4-didehydroretinol + NAD(+) = all-trans-3,4-didehydroretinal + NADH + H(+). It catalyses the reaction all-trans-4-hydroxyretinol + NAD(+) = all-trans-4-hydroxyretinal + NADH + H(+). The enzyme catalyses all-trans-4-oxoretinol + NAD(+) = all-trans-4-oxoretinal + NADH + H(+). It carries out the reaction 12-hydroxydodecanoate + NAD(+) = 12-oxododecanoate + NADH + H(+). The catalysed reaction is 16-hydroxyhexadecanoate + NAD(+) = 16-oxohexadecanoate + NADH + H(+). It catalyses the reaction hexan-1-ol + NAD(+) = hexanal + NADH + H(+). The enzyme catalyses (E)-hex-2-en-1-ol + NAD(+) = (E)-hex-2-enal + NADH + H(+). It carries out the reaction (E)-4-hydroxynon-2-en-1-ol + NAD(+) = (E)-4-hydroxynon-2-enal + NADH + H(+). Retinol oxidation is inhibited by the detergent Tween 80. Ethanol inhibits both all-trans-retinol and 9-cis-retinol oxidation. 13-cis-retinol is an effective competitive inhibitor of the 9-cis-retinol oxidation. All-trans-retinoic acid is a powerful inhibitor of all-trans-retinol oxidation. 13-cis-retinoic acid is a powerful inhibitor of all-trans-retinol oxidation. Cimetidine competitively inhibited ethanol oxidation. In terms of biological role, catalyzes the NAD-dependent oxidation of all-trans-retinol, alcohol, and omega-hydroxy fatty acids and their derivatives. Oxidizes preferentially all trans-retinol, all-trans-4-hydroxyretinol, 9-cis-retinol, 2-hexenol, and long chain omega-hydroxy fatty acids such as juniperic acid. In vitro can also catalyze the NADH-dependent reduction of all-trans-retinal and aldehydes and their derivatives. Reduces preferentially all trans-retinal, all-trans-4-oxoretinal and hexanal. Catalyzes in the oxidative direction with higher efficiency. Therefore may participate in retinoid metabolism, fatty acid omega-oxidation, and elimination of cytotoxic aldehydes produced by lipid peroxidation. The chain is All-trans-retinol dehydrogenase [NAD(+)] ADH7 from Homo sapiens (Human).